The primary structure comprises 857 residues: Median body protein (857 aa).

2 coiled-coil regions span residues 169-546 (HNAL…MRTE) and 571-793 (LAHL…TKAM).

It is found in the cytoplasm. The protein localises to the cytoskeleton. Functionally, structural component of the ventral disk involved in maintanance of a domed conformation of the disk required for proper attachment. May have a role in immobilizing the microtubules between cell divisions. This Giardia intestinalis (strain ATCC 50803 / WB clone C6) (Giardia lamblia) protein is Median body protein.